The sequence spans 481 residues: Glutamyl-tRNA(Gln) amidotransferase subunit A (481 aa).

Catalysis depends on charge relay system residues K78 and S153. S177 functions as the Acyl-ester intermediate in the catalytic mechanism.

Belongs to the amidase family. GatA subfamily. In terms of assembly, heterotrimer of A, B and C subunits.

It catalyses the reaction L-glutamyl-tRNA(Gln) + L-glutamine + ATP + H2O = L-glutaminyl-tRNA(Gln) + L-glutamate + ADP + phosphate + H(+). In terms of biological role, allows the formation of correctly charged Gln-tRNA(Gln) through the transamidation of misacylated Glu-tRNA(Gln) in organisms which lack glutaminyl-tRNA synthetase. The reaction takes place in the presence of glutamine and ATP through an activated gamma-phospho-Glu-tRNA(Gln). The sequence is that of Glutamyl-tRNA(Gln) amidotransferase subunit A from Borrelia garinii subsp. bavariensis (strain ATCC BAA-2496 / DSM 23469 / PBi) (Borreliella bavariensis).